The chain runs to 739 residues: Glycine--tRNA ligase (739 aa).

A mitochondrion-targeting transit peptide spans 1–36 (MPSPRPVLLRGARAALLLLLPPRLLARPSLLLRRSL). The residue at position 35 (S35) is a Phosphoserine. A WHEP-TRS domain is found at 63–119 (VLAPLRLAVRQQGDLVRKLKEDKAPQVDVDKAVAELKARKRVLEAKELALQPKDDIV). An N6-acetyllysine modification is found at K204. E299 serves as a coordination point for glycine. ATP is bound by residues 331–333 (RNE) and 342–343 (RV). E350 contributes to the glycine binding site. Position 453 is a phosphotyrosine (Y453). 457-458 (EI) is an ATP binding site. An N6-acetyllysine modification is found at K501. 576–578 (EPS) is a binding site for glycine. R583 is an ATP binding site. S700 bears the Phosphoserine mark. The residue at position 736 (T736) is a Phosphothreonine.

The protein belongs to the class-II aminoacyl-tRNA synthetase family. In terms of assembly, homodimer. As to expression, widely expressed, including in brain and spinal cord. In terms of tissue distribution, expressed in brain, spinal cord, muscle, heart and spleen. Expressed in brain, spinal cord, muscle, heart, spleen and liver.

Its subcellular location is the cytoplasm. The protein localises to the cell projection. The protein resides in the axon. It localises to the secreted. It is found in the extracellular exosome. Its subcellular location is the mitochondrion. It carries out the reaction tRNA(Gly) + glycine + ATP = glycyl-tRNA(Gly) + AMP + diphosphate. The enzyme catalyses 2 ATP + H(+) = P(1),P(4)-bis(5'-adenosyl) tetraphosphate + diphosphate. Ap4A synthesis is inhibited by tRNA, via the disruption of the second ATP-binding site by direct blocking and/or by tRNA-induced conformational change. In terms of biological role, catalyzes the ATP-dependent ligation of glycine to the 3'-end of its cognate tRNA, via the formation of an aminoacyl-adenylate intermediate (Gly-AMP). Also produces diadenosine tetraphosphate (Ap4A), a universal pleiotropic signaling molecule needed for cell regulation pathways, by direct condensation of 2 ATPs. Thereby, may play a special role in Ap4A homeostasis. The sequence is that of Glycine--tRNA ligase from Homo sapiens (Human).